We begin with the raw amino-acid sequence, 1025 residues long: Multidrug resistance protein MdtC (1025 aa).

The next 12 helical transmembrane spans lie at 3 to 23 (FFAL…AITL), 333 to 353 (EVEQ…FLFL), 360 to 380 (IIPA…MYLC), 387 to 407 (LSLM…IVVL), 431 to 451 (VGFT…PLLL), 463 to 483 (FAVT…TLTP), 528 to 548 (LVGV…ISIP), 853 to 873 (VILI…LYES), 875 to 895 (VHPL…LLAL), 897 to 917 (LFNA…IGIV), 953 to 973 (PIMM…LSGG), and 984 to 1004 (ITIV…TPVV).

Belongs to the resistance-nodulation-cell division (RND) (TC 2.A.6) family. MdtC subfamily. In terms of assembly, part of a tripartite efflux system composed of MdtA, MdtB and MdtC. MdtC forms a heteromultimer with MdtB.

The protein resides in the cell inner membrane. Its function is as follows. The MdtABC tripartite complex confers resistance against novobiocin and deoxycholate. The polypeptide is Multidrug resistance protein MdtC (Escherichia coli O1:K1 / APEC).